Here is a 381-residue protein sequence, read N- to C-terminus: Cytochrome b (381 aa).

4 helical membrane-spanning segments follow: residues 31 to 51 (FGFLSSICLIVQILTGIFLAM), 75 to 97 (WLLRYIHTNGASMFFIVVYIHIF), 112 to 132 (VWVIGVLILLLMILTAFIGYV), and 178 to 198 (FFSLHYLMPFVIAAVSLVHLA). Heme b contacts are provided by histidine 81 and histidine 95. Heme b is bound by residues histidine 182 and histidine 196. Position 201 (histidine 201) interacts with a ubiquinone. The next 4 membrane-spanning stretches (helical) occupy residues 224 to 244 (FIVKDFLGMVIFIIFFSIFVY), 288 to 308 (LGGVTAMISAIAILAFLPWIH), 320 to 340 (LYRLFYWVMISCCLILGWIGG), and 347 to 367 (YVIIGQIASIYYFIYFIILLP).

This sequence belongs to the cytochrome b family. The main subunits of complex b-c1 are: cytochrome b, cytochrome c1 and the Rieske protein. Heme b is required as a cofactor.

Its subcellular location is the mitochondrion inner membrane. Functionally, component of the ubiquinol-cytochrome c reductase complex (complex III or cytochrome b-c1 complex) that is part of the mitochondrial respiratory chain. The b-c1 complex mediates electron transfer from ubiquinol to cytochrome c. Contributes to the generation of a proton gradient across the mitochondrial membrane that is then used for ATP synthesis. This chain is Cytochrome b (MT-CYB), found in Chondrus crispus (Carrageen Irish moss).